Consider the following 347-residue polypeptide: Fructose-1,6-bisphosphatase (347 aa).

Residues 19–23 and 44–48 contribute to the AMP site; these read ILQEQ and SGELS. 2 residues coordinate Mg(2+): D85 and E114. 127-128 lines the AMP pocket; the sequence is SY. Positions 133, 135, and 136 each coordinate Mg(2+). 136 to 139 serves as a coordination point for substrate; it reads DGSS. K155 serves as a coordination point for AMP. Substrate contacts are provided by residues 227 to 230, 258 to 263, Y279, and 288 to 290; these read NEGY, RYIGSM, and KLR. E294 is a Mg(2+) binding site.

The protein belongs to the FBPase class 1 family. As to quaternary structure, homotetramer. Mg(2+) is required as a cofactor.

It catalyses the reaction beta-D-fructose 1,6-bisphosphate + H2O = beta-D-fructose 6-phosphate + phosphate. The protein operates within carbohydrate biosynthesis; gluconeogenesis. Subject to complex allosteric regulation. The enzyme can assume an active R-state, or an inactive T-state. Intermediate conformations may exist. AMP acts as allosteric inhibitor. AMP binding affects the turnover of bound substrate and not the affinity for substrate. In Schizosaccharomyces pombe (strain 972 / ATCC 24843) (Fission yeast), this protein is Fructose-1,6-bisphosphatase (fbp1).